We begin with the raw amino-acid sequence, 453 residues long: Autophagy-related protein 18 (453 aa).

WD repeat units follow at residues 9 to 49, 204 to 244, and 249 to 288; these read KSSN…YTNN, AHKT…KLHQ, and SYAARIYSLNFNAVSTLLAVSSDTETVHIFKLSSGAGAGA. Residues 245–249 carry the L/FRRG motif motif; the sequence is FRRGS. The segment at 284–324 is disordered; sequence AGAGAKGRSSSNGGESPSLNSFDGSSDSSSPPGSTTNATRG. The segment covering 289-320 has biased composition (low complexity); sequence KGRSSSNGGESPSLNSFDGSSDSSSPPGSTTN.

This sequence belongs to the WD repeat PROPPIN family. Component of the PI(3,5)P2 regulatory complex.

Its subcellular location is the preautophagosomal structure membrane. It localises to the vacuole membrane. The protein resides in the endosome membrane. In terms of biological role, the PI(3,5)P2 regulatory complex regulates both the synthesis and turnover of phosphatidylinositol 3,5-bisphosphate (PtdIns(3,5)P2). Necessary for proper vacuole morphology. Plays an important role in osmotically-induced vacuole fragmentation. Required for cytoplasm to vacuole transport (Cvt) vesicle formation, pexophagy and starvation-induced autophagy. Involved in correct ATG9 trafficking to the pre-autophagosomal structure. Might also be involved in premeiotic DNA replication. This chain is Autophagy-related protein 18 (ATG18), found in Mycosarcoma maydis (Corn smut fungus).